Reading from the N-terminus, the 402-residue chain is Dynactin subunit 2 (402 aa).

The interval 1–26 is disordered; the sequence is MADPKYADLPGIARNEPDVYETSDLP. 2 coiled-coil regions span residues 101–132 and 357–402; these read PQQR…SAAE and VHLD…KRLQ.

This sequence belongs to the dynactin subunit 2 family. In terms of assembly, subunit of dynactin, a multiprotein complex part of a tripartite complex with dynein and a adapter, such as BICDL1, BICD2 or HOOK3. The dynactin complex is built around ACTR1A/ACTB filament and consists of an actin-related filament composed of a shoulder domain, a pointed end and a barbed end. Its length is defined by its flexible shoulder domain. The soulder is composed of 2 DCTN1 subunits, 4 DCTN2 and 2 DCTN3.

The protein localises to the cytoplasm. It localises to the cytoskeleton. It is found in the microtubule organizing center. The protein resides in the centrosome. Its subcellular location is the membrane. Part of the dynactin complex that activates the molecular motor dynein for ultra-processive transport along microtubules. In the dynactin soulder domain, binds the ACTR1A filament and acts as a molecular ruler to determine the length. Modulates cytoplasmic dynein binding to an organelle, and plays a role in prometaphase chromosome alignment and spindle organization during mitosis. Involved in anchoring microtubules to centrosomes. This is Dynactin subunit 2 (DCTN2) from Gallus gallus (Chicken).